The sequence spans 201 residues: Casparian strip membrane protein 2 (201 aa).

The Cytoplasmic segment spans residues 1-38; the sequence is MKSTGEATAINIGETKSASATTVATTKAIQHPKAGLKR. The helical transmembrane segment at 39-59 threads the bilayer; that stretch reads GLAIFDFILRLSAIGAALAAT. At 60–89 the chain is on the extracellular side; sequence TTMGTTDQTLPFFTQFFQFQASYDDLPAFS. The chain crosses the membrane as a helical span at residues 90–110; the sequence is FFVIANAIASGYLFLSLPFSI. Topologically, residues 111-129 are cytoplasmic; that stretch reads VCIVRPHAMGARLLLVICD. Residues 130 to 150 form a helical membrane-spanning segment; that stretch reads TVMVALTIAAAAAAAAIVYLA. Residues 151 to 175 are Extracellular-facing; it reads HNGNSNANWVAICQQFDDFCQSVSG. The helical transmembrane segment at 176–196 threads the bilayer; it reads AVVASFIAAVLFMLMIVLSAF. Residues 197–201 lie on the Cytoplasmic side of the membrane; sequence SLRKH.

This sequence belongs to the Casparian strip membrane proteins (CASP) family. In terms of assembly, homodimer and heterodimers.

It localises to the cell membrane. Regulates membrane-cell wall junctions and localized cell wall deposition. Required for establishment of the Casparian strip membrane domain (CSD) and the subsequent formation of Casparian strips, a cell wall modification of the root endodermis that determines an apoplastic barrier between the intraorganismal apoplasm and the extraorganismal apoplasm and prevents lateral diffusion. In Vitis vinifera (Grape), this protein is Casparian strip membrane protein 2.